The following is a 163-amino-acid chain: Peptidyl-prolyl cis-trans isomerase-like 1 (163 aa).

Residues 1–155 (MATDVAVETT…TEVKIVKARV (155 aa)) form the PPIase cyclophilin-type domain.

This sequence belongs to the cyclophilin-type PPIase family. PPIL1 subfamily.

The catalysed reaction is [protein]-peptidylproline (omega=180) = [protein]-peptidylproline (omega=0). Its function is as follows. PPIases accelerate the folding of proteins. It catalyzes the cis-trans isomerization of proline imidic peptide bonds in oligopeptides. In Neurospora crassa (strain ATCC 24698 / 74-OR23-1A / CBS 708.71 / DSM 1257 / FGSC 987), this protein is Peptidyl-prolyl cis-trans isomerase-like 1 (ppi-1).